The following is a 604-amino-acid chain: Polycomb group protein EMF2B (604 aa).

The C2H2-type zinc finger occupies 310–331 (CPFCLVPCGSFKGLGCHLNASH). Residues 396–440 (PHIVDSGSPEDAQAGSEDDYVQRENGSSVAHASVDPANSLHGSNL) form a disordered region. Residues 454 to 589 (LSVERADPRN…DARAMNACNT (136 aa)) form a VEFS-box region.

This sequence belongs to the VEFS (VRN2-EMF2-FIS2-SU(Z)12) family. In terms of assembly, component of the polycomb repressive complex 2 (PRC2), composed of the core PRC2 components FIE2, EZ1 and CLF. PRC2 methylates 'Lys-27' residues of histone H3 (H3K27me3), leading to transcriptional repression of the affected target gene. Widely expressed.

Polycomb group (PcG) protein. PcG proteins act by forming multiprotein complexes, which are required to maintain the transcriptionally repressive state of homeotic genes throughout development. PcG proteins are not required to initiate repression, but to maintain it during later stages of development. They act via the methylation of histones, rendering chromatin heritably changed in its expressibility. Polycomb group (PcG) protein involved in the repression of flowering under long day (LD) conditions. Regulates floret development. In Oryza sativa subsp. japonica (Rice), this protein is Polycomb group protein EMF2B.